A 408-amino-acid polypeptide reads, in one-letter code: BRCA1-A complex subunit Abraxas 1 (408 aa).

Positions 7–155 (TAVISGFVFG…KSTHRLEYAL (149 aa)) constitute an MPN domain. A coiled-coil region spans residues 210-272 (ALAEVNRISD…MEEKGNKVSE (63 aa)). Residues 335 to 408 (HRRQAGKRKA…EVSRSKSPTF (74 aa)) form a disordered region. Positions 337 to 358 (RQAGKRKAHSKQLGKTSTKKSR) are enriched in basic residues. Residues 394–408 (QSLNVEVSRSKSPTF) show a composition bias toward polar residues. S405 carries the post-translational modification Phosphoserine. A pSXXF motif motif is present at residues 405-408 (SPTF).

It belongs to the FAM175 family. Abraxas subfamily. As to quaternary structure, component of the BRCA1-A complex. Component of the BRISC complex. Homodimer. Interacts directly (when phosphorylated at Ser-405) with brca1. The phosphorylated homodimer can interact directly with two brca1 chains, giving rise to a heterotetramer. Phosphorylation of Ser-405 of the pSXXF motif by ATM or ATR constitutes a specific recognition motif for the BRCT domain of BRCA1.

It is found in the nucleus. In terms of biological role, involved in DNA damage response and double-strand break (DSB) repair. Component of the BRCA1-A complex, acting as a central scaffold protein that assembles the various components of the complex and mediates the recruitment of brca1. The BRCA1-A complex specifically recognizes 'Lys-63'-linked ubiquitinated histones H2A and H2AX at DNA lesion sites, leading to target the brca1-bard1 heterodimer to sites of DNA damage at DSBs. This complex also possesses deubiquitinase activity that specifically removes 'Lys-63'-linked ubiquitin on histones H2A and H2AX. This Xenopus laevis (African clawed frog) protein is BRCA1-A complex subunit Abraxas 1.